Reading from the N-terminus, the 861-residue chain is MELKRGKTFIKSSLQVSHEKPPDPAAVAAAREGTGPWSVLPGGQQRPHSEKGPQASPSAQEYDRCPNKGAQLDPKGGPAALCGATFKPVRKCKTHDSMSGAGRATAATGQLVGSASFPGSPGSRRMIDYRHFVPQMPFVPAVAKSIPRKRISLKRPKKCFRNLFHIRRNKTEDLASLAAEGKSLPSPGDPSDPGGRRSKAFLPPGEGPGLDGLCQDLLDSELLADASFGLCRALCEDVASLQSFDSLTGCGEVFADESSVPSLELNEGPESPTQAAQGLESKVPRGPLQGSVEQLASPAQNEASDFTRFWDSVNRSVRQQQRALLGPWLSGPQGTDRDQSRLDTAGLAELPLCPCRDPRSGSKASSIDTGTPKSEQPESVSTSDEGYYDSFSPGLEEDKKEAESPGTPAATFPRDSYSGDALYELFHDPSEGPLGPSPDDDLCVSESLSGPALGTPLSICSFRVGAEENLAPAPGPDLLSQGFLQSSWKGKECLLKLCDTELAITMGIVSWLRRGPTPRAPPTPGQPAAPPGSQGAPRAPTEKLGGREGLASDAGGATVCSAPSRQELWAHPGTTGLLAGESKALGGATQGTGTLSRDASREEETRGHSEGLFSSMESAATSTTDTSGKNKAPVPSTWPCSQKEPGPPGVLGCFRGPWRPGHGGDTLDAEPMLAGCVARVAALKISSNEQPPAAWPPRQDMGSGLFGQRWARGPDMLEQKQSSSSPSMTTIHGLPYSASTQDQRCRDRVQDLSWLRVEPTGLGVQAWASVEDQPLQLSTEAVEQVAHGSQLDSEPRSAPAARWSSQGHHPESLGLTLNSQQEGGVSASAPECRCSLLAREGLLCGQPEVGASGPAMAEPHL.

Disordered regions lie at residues 1 to 77 (MELK…PKGG), 179 to 206 (AEGK…PPGE), 261 to 289 (PSLE…GPLQ), 351 to 415 (PLCP…FPRD), 514 to 558 (RGPT…GGAT), 576 to 644 (GLLA…SQKE), 716 to 742 (MLEQ…STQD), and 786 to 822 (AHGS…SQQE). Polar residues predominate over residues 362-384 (SKASSIDTGTPKSEQPESVSTSD). The span at 518-530 (PRAPPTPGQPAAP) shows a compositional bias: pro residues. Positions 584-595 (ALGGATQGTGTL) are enriched in low complexity. Positions 598-609 (DASREEETRGHS) are enriched in basic and acidic residues. Polar residues-rich tracts occupy residues 615–629 (SMES…TSGK) and 719–730 (QKQSSSSPSMTT).

This sequence belongs to the Amer family.

It is found in the cell membrane. Functionally, regulator of the canonical Wnt signaling pathway. Acts by specifically binding phosphatidylinositol 4,5-bisphosphate (PtdIns(4,5)P2), translocating to the cell membrane. The protein is APC membrane recruitment protein 3 (AMER3) of Homo sapiens (Human).